The chain runs to 616 residues: UvrABC system protein C (616 aa).

The region spanning 21 to 99 (HQPGVYRMYD…IKLYLPKYNV (79 aa)) is the GIY-YIG domain. The UVR domain occupies 209–244 (RQVIASLVEKMEQASQSLNFEQAATFRDQIQALRRV).

The protein belongs to the UvrC family. Interacts with UvrB in an incision complex.

It is found in the cytoplasm. The UvrABC repair system catalyzes the recognition and processing of DNA lesions. UvrC both incises the 5' and 3' sides of the lesion. The N-terminal half is responsible for the 3' incision and the C-terminal half is responsible for the 5' incision. The protein is UvrABC system protein C of Photobacterium profundum (strain SS9).